Consider the following 199-residue polypeptide: uncharacterized protein (199 aa).

The signal sequence occupies residues 1 to 28 (MKKLATVGSLIVTSTLVFSSMPFQNAHA).

It localises to the secreted. This is an uncharacterized protein from Staphylococcus aureus (strain NCTC 8325 / PS 47).